We begin with the raw amino-acid sequence, 509 residues long: UDP-N-acetylmuramyl-tripeptide synthetase (509 aa).

124–130 (GTNGKTS) provides a ligand contact to ATP. Residues 164-165 (TT), S191, and R199 contribute to the UDP-N-acetyl-alpha-D-muramoyl-L-alanyl-D-glutamate site. Residue K231 is modified to N6-carboxylysine.

Belongs to the MurCDEF family. MurE subfamily. In terms of processing, carboxylation is probably crucial for Mg(2+) binding and, consequently, for the gamma-phosphate positioning of ATP.

The protein resides in the cytoplasm. It functions in the pathway cell wall biogenesis; peptidoglycan biosynthesis. Its function is as follows. Catalyzes the addition of an amino acid to the nucleotide precursor UDP-N-acetylmuramoyl-L-alanyl-D-glutamate (UMAG) in the biosynthesis of bacterial cell-wall peptidoglycan. This chain is UDP-N-acetylmuramyl-tripeptide synthetase, found in Tropheryma whipplei (strain Twist) (Whipple's bacillus).